We begin with the raw amino-acid sequence, 237 residues long: 2-C-methyl-D-erythritol 4-phosphate cytidylyltransferase (237 aa).

It belongs to the IspD/TarI cytidylyltransferase family. IspD subfamily.

The enzyme catalyses 2-C-methyl-D-erythritol 4-phosphate + CTP + H(+) = 4-CDP-2-C-methyl-D-erythritol + diphosphate. It functions in the pathway isoprenoid biosynthesis; isopentenyl diphosphate biosynthesis via DXP pathway; isopentenyl diphosphate from 1-deoxy-D-xylulose 5-phosphate: step 2/6. Functionally, catalyzes the formation of 4-diphosphocytidyl-2-C-methyl-D-erythritol from CTP and 2-C-methyl-D-erythritol 4-phosphate (MEP). This chain is 2-C-methyl-D-erythritol 4-phosphate cytidylyltransferase, found in Vibrio vulnificus (strain YJ016).